The sequence spans 286 residues: Polyamine aminopropyltransferase (286 aa).

The PABS domain occupies 6 to 239 (PVWIDEVFED…GWWSWLYASD (234 aa)). Glutamine 34 provides a ligand contact to S-methyl-5'-thioadenosine. Spermidine contacts are provided by histidine 65 and aspartate 89. S-methyl-5'-thioadenosine-binding positions include glutamate 109 and 140-141 (DG). Residue aspartate 159 is the Proton acceptor of the active site. Residue 159–162 (DGSD) participates in spermidine binding. An S-methyl-5'-thioadenosine-binding site is contributed by proline 166.

This sequence belongs to the spermidine/spermine synthase family. As to quaternary structure, homodimer or homotetramer. Homodimer.

The protein resides in the cytoplasm. The enzyme catalyses S-adenosyl 3-(methylsulfanyl)propylamine + putrescine = S-methyl-5'-thioadenosine + spermidine + H(+). It participates in amine and polyamine biosynthesis; spermidine biosynthesis; spermidine from putrescine: step 1/1. Functionally, catalyzes the irreversible transfer of a propylamine group from the amino donor S-adenosylmethioninamine (decarboxy-AdoMet) to putrescine (1,4-diaminobutane) to yield spermidine. The polypeptide is Polyamine aminopropyltransferase (Synechococcus elongatus (strain ATCC 33912 / PCC 7942 / FACHB-805) (Anacystis nidulans R2)).